A 235-amino-acid chain; its full sequence is UPF0758 protein A1S_2918 (235 aa).

Residues 1-20 (MNTSIKNWPEQERPRERLLQ) are disordered. The span at 9–18 (PEQERPRERL) shows a compositional bias: basic and acidic residues. The 123-residue stretch at 105–227 (SLHSSHLVLD…SFSFAEQQLL (123 aa)) folds into the MPN domain. Positions 176, 178, and 189 each coordinate Zn(2+). The JAMM motif motif lies at 176-189 (HNHPFGSPQPSPED).

The protein belongs to the UPF0758 family.

This is UPF0758 protein A1S_2918 from Acinetobacter baumannii (strain ATCC 17978 / DSM 105126 / CIP 53.77 / LMG 1025 / NCDC KC755 / 5377).